The chain runs to 209 residues: Ion-translocating oxidoreductase complex subunit G (209 aa).

The chain crosses the membrane as a helical span at residues 9-29; the sequence is GITLAIFAALTTGLTAVVNSL. The residue at position 175 (Thr175) is an FMN phosphoryl threonine.

It belongs to the RnfG family. In terms of assembly, the complex is composed of six subunits: RnfA, RnfB, RnfC, RnfD, RnfE and RnfG. The cofactor is FMN.

It is found in the cell inner membrane. Part of a membrane-bound complex that couples electron transfer with translocation of ions across the membrane. This Photorhabdus laumondii subsp. laumondii (strain DSM 15139 / CIP 105565 / TT01) (Photorhabdus luminescens subsp. laumondii) protein is Ion-translocating oxidoreductase complex subunit G.